The sequence spans 170 residues: Peptide deformylase (170 aa).

Fe cation-binding residues include Cys-94 and His-136. Residue Glu-137 is part of the active site. Position 140 (His-140) interacts with Fe cation.

Belongs to the polypeptide deformylase family. Requires Fe(2+) as cofactor.

The enzyme catalyses N-terminal N-formyl-L-methionyl-[peptide] + H2O = N-terminal L-methionyl-[peptide] + formate. Removes the formyl group from the N-terminal Met of newly synthesized proteins. Requires at least a dipeptide for an efficient rate of reaction. N-terminal L-methionine is a prerequisite for activity but the enzyme has broad specificity at other positions. The protein is Peptide deformylase of Stenotrophomonas maltophilia (strain K279a).